The sequence spans 220 residues: Ribosomal RNA large subunit methyltransferase E (220 aa).

Residues G60, W62, D92, D108, and D133 each contribute to the S-adenosyl-L-methionine site. K173 (proton acceptor) is an active-site residue.

This sequence belongs to the class I-like SAM-binding methyltransferase superfamily. RNA methyltransferase RlmE family.

The protein resides in the cytoplasm. It carries out the reaction uridine(2552) in 23S rRNA + S-adenosyl-L-methionine = 2'-O-methyluridine(2552) in 23S rRNA + S-adenosyl-L-homocysteine + H(+). Its function is as follows. Specifically methylates the uridine in position 2552 of 23S rRNA at the 2'-O position of the ribose in the fully assembled 50S ribosomal subunit. The chain is Ribosomal RNA large subunit methyltransferase E from Burkholderia multivorans (strain ATCC 17616 / 249).